We begin with the raw amino-acid sequence, 325 residues long: MSEELWVEKYRPRSLDEIVDQEEIVKRLKEFVKNKNMPHLLFAGPPGTGKTTAALALAHDLYGESWRDNTLELNASDERGIDVIRSRIKDYARTLPIGDVPFKLVILDEADNMTGDAQQALRRTMELFSRNTRFILIANYASKIIEPIQSRCAVFRFQPLPKGDAFQRLRWIAQQEGITVDDGALEAIWEESQGDLRKAINTLQAASAISRNVTEEVVYAALGRVKPKEVREMIESALKGNLLEARDKLRLLLYNYGLSGVDIIRFIHREVLSQKSVRLDDATLAELLVLVGETNYRIVEGSDDEIQLMALLSKLALVSKKAAKG.

ATP is bound at residue 44–51 (GPPGTGKT).

The protein belongs to the activator 1 small subunits family. RfcS subfamily. In terms of assembly, heteromultimer composed of small subunits (RfcS) and large subunits (RfcL).

In terms of biological role, part of the RFC clamp loader complex which loads the PCNA sliding clamp onto DNA. This Thermofilum pendens (strain DSM 2475 / Hrk 5) protein is Replication factor C small subunit.